The primary structure comprises 172 residues: Low molecular mass early light-inducible protein HV90, chloroplastic (172 aa).

A chloroplast-targeting transit peptide spans 1-38 (MATMMSMSSFAGAAVVPRSSASSFGARSLPALGRRALV). The next 2 membrane-spanning stretches (helical) occupy residues 106–126 (GQAWFAYTVAVLSMASLVPLL) and 150–170 (FAMLGLVALAATEIITGAPFI).

Belongs to the ELIP/psbS family.

Its subcellular location is the plastid. The protein localises to the chloroplast membrane. Its function is as follows. Probably involved in the integration of pigments into the mature pigment-protein complexes. In Hordeum vulgare (Barley), this protein is Low molecular mass early light-inducible protein HV90, chloroplastic.